The following is a 175-amino-acid chain: Large ribosomal subunit protein uL10 (175 aa).

This sequence belongs to the universal ribosomal protein uL10 family. Part of the ribosomal stalk of the 50S ribosomal subunit. The N-terminus interacts with L11 and the large rRNA to form the base of the stalk. The C-terminus forms an elongated spine to which L12 dimers bind in a sequential fashion forming a multimeric L10(L12)X complex.

Its function is as follows. Forms part of the ribosomal stalk, playing a central role in the interaction of the ribosome with GTP-bound translation factors. In Mycobacterium sp. (strain JLS), this protein is Large ribosomal subunit protein uL10.